Reading from the N-terminus, the 420-residue chain is Tyrosine--tRNA ligase 2 (420 aa).

Tyrosine 36 contacts L-tyrosine. The 'HIGH' region motif lies at proline 41–histidine 50. Tyrosine 171 and glutamine 175 together coordinate L-tyrosine. Positions lysine 231–threonine 235 match the 'KMSKS' region motif. Lysine 234 contributes to the ATP binding site. The 67-residue stretch at leucine 354–tyrosine 420 folds into the S4 RNA-binding domain.

It belongs to the class-I aminoacyl-tRNA synthetase family. TyrS type 1 subfamily. As to quaternary structure, homodimer.

It is found in the cytoplasm. It catalyses the reaction tRNA(Tyr) + L-tyrosine + ATP = L-tyrosyl-tRNA(Tyr) + AMP + diphosphate + H(+). Functionally, catalyzes the attachment of tyrosine to tRNA(Tyr) in a two-step reaction: tyrosine is first activated by ATP to form Tyr-AMP and then transferred to the acceptor end of tRNA(Tyr). In Enterococcus faecalis (strain ATCC 700802 / V583), this protein is Tyrosine--tRNA ligase 2.